A 146-amino-acid chain; its full sequence is uncharacterized protein (146 aa).

The segment at 87-121 is disordered; it reads SRSHHSTAKSAKSALSSDSGDGSDPDPEPETFPSA. A compositionally biased stretch (low complexity) spans 94–106; the sequence is AKSAKSALSSDSG.

This is an uncharacterized protein from Escherichia coli (strain K12).